A 125-amino-acid chain; its full sequence is Holo-[acyl-carrier-protein] synthase (125 aa).

2 residues coordinate Mg(2+): aspartate 6 and glutamate 55.

This sequence belongs to the P-Pant transferase superfamily. AcpS family. It depends on Mg(2+) as a cofactor.

It localises to the cytoplasm. It carries out the reaction apo-[ACP] + CoA = holo-[ACP] + adenosine 3',5'-bisphosphate + H(+). Functionally, transfers the 4'-phosphopantetheine moiety from coenzyme A to a Ser of acyl-carrier-protein. This is Holo-[acyl-carrier-protein] synthase from Chlorobium phaeovibrioides (strain DSM 265 / 1930) (Prosthecochloris vibrioformis (strain DSM 265)).